A 115-amino-acid chain; its full sequence is NADH-ubiquinone oxidoreductase chain 3 (115 aa).

A run of 3 helical transmembrane segments spans residues 3-23 (LLMALFIDASLSLILISIAFW), 55-75 (FFLVAITFLLFDLEIALLLPL), and 84-104 (LSAMMVTSFILISVLALGLMY).

This sequence belongs to the complex I subunit 3 family. Core subunit of respiratory chain NADH dehydrogenase (Complex I) which is composed of 45 different subunits. Interacts with TMEM186. Interacts with TMEM242.

The protein localises to the mitochondrion inner membrane. It carries out the reaction a ubiquinone + NADH + 5 H(+)(in) = a ubiquinol + NAD(+) + 4 H(+)(out). In terms of biological role, core subunit of the mitochondrial membrane respiratory chain NADH dehydrogenase (Complex I) which catalyzes electron transfer from NADH through the respiratory chain, using ubiquinone as an electron acceptor. Essential for the catalytic activity of complex I. The sequence is that of NADH-ubiquinone oxidoreductase chain 3 from Sigmodon ochrognathus (Yellow-nosed cotton rat).